The chain runs to 471 residues: Membrane-associated sulfotransferase kil1 (471 aa).

Over M1–N12 the chain is Cytoplasmic. Residues I13–P33 form a helical; Signal-anchor for type II membrane protein membrane-spanning segment. Topologically, residues Q34–N471 are lumenal. Residue N47 is glycosylated (N-linked (GlcNAc...) asparagine). Low complexity-rich tracts occupy residues N89 to K105 and N112 to N127. Positions N89 to N127 are disordered. Residues K167 to F172, R252, and S260 each bind 3'-phosphoadenylyl sulfate. N324 and N344 each carry an N-linked (GlcNAc...) asparagine glycan. Y348 contacts 3'-phosphoadenylyl sulfate.

The protein belongs to the sulfotransferase 1 family.

It localises to the membrane. In terms of biological role, sulfotransferase involved in intracellular killing of bacteria. The polypeptide is Membrane-associated sulfotransferase kil1 (kil1) (Dictyostelium discoideum (Social amoeba)).